A 546-amino-acid chain; its full sequence is CTP synthase (546 aa).

Residues 1–266 are amidoligase domain; it reads MTTNYIFVTG…DDLVCARFGI (266 aa). Residue Ser14 coordinates CTP. Residue Ser14 coordinates UTP. ATP contacts are provided by residues 15 to 20 and Asp72; that span reads SLGKGI. The Mg(2+) site is built by Asp72 and Glu140. CTP-binding positions include 147–149, 187–192, and Lys223; these read DIE and KTKPTQ. Residues 187–192 and Lys223 contribute to the UTP site; that span reads KTKPTQ. 239–241 is an ATP binding site; sequence KDV. Positions 291–542 constitute a Glutamine amidotransferase type-1 domain; sequence TIGMVGKYIE…VKAAGQNARG (252 aa). Gly352 contacts L-glutamine. The active-site Nucleophile; for glutamine hydrolysis is Cys379. L-glutamine contacts are provided by residues 380-383, Glu403, and Arg470; that span reads LGMQ. Catalysis depends on residues His515 and Glu517.

This sequence belongs to the CTP synthase family. Homotetramer.

The catalysed reaction is UTP + L-glutamine + ATP + H2O = CTP + L-glutamate + ADP + phosphate + 2 H(+). The enzyme catalyses L-glutamine + H2O = L-glutamate + NH4(+). It catalyses the reaction UTP + NH4(+) + ATP = CTP + ADP + phosphate + 2 H(+). It functions in the pathway pyrimidine metabolism; CTP biosynthesis via de novo pathway; CTP from UDP: step 2/2. Allosterically activated by GTP, when glutamine is the substrate; GTP has no effect on the reaction when ammonia is the substrate. The allosteric effector GTP functions by stabilizing the protein conformation that binds the tetrahedral intermediate(s) formed during glutamine hydrolysis. Inhibited by the product CTP, via allosteric rather than competitive inhibition. Its function is as follows. Catalyzes the ATP-dependent amination of UTP to CTP with either L-glutamine or ammonia as the source of nitrogen. Regulates intracellular CTP levels through interactions with the four ribonucleotide triphosphates. In Vibrio campbellii (strain ATCC BAA-1116), this protein is CTP synthase.